Consider the following 190-residue polypeptide: NADH-quinone oxidoreductase subunit C (190 aa).

The protein belongs to the complex I 30 kDa subunit family. In terms of assembly, NDH-1 is composed of 14 different subunits. Subunits NuoB, C, D, E, F, and G constitute the peripheral sector of the complex.

The protein resides in the cell membrane. The enzyme catalyses a quinone + NADH + 5 H(+)(in) = a quinol + NAD(+) + 4 H(+)(out). Functionally, NDH-1 shuttles electrons from NADH, via FMN and iron-sulfur (Fe-S) centers, to quinones in the respiratory chain. The immediate electron acceptor for the enzyme in this species is believed to be ubiquinone. Couples the redox reaction to proton translocation (for every two electrons transferred, four hydrogen ions are translocated across the cytoplasmic membrane), and thus conserves the redox energy in a proton gradient. The protein is NADH-quinone oxidoreductase subunit C of Wolbachia sp. subsp. Brugia malayi (strain TRS).